We begin with the raw amino-acid sequence, 99 residues long: Large ribosomal subunit protein bL25 (99 aa).

The protein belongs to the bacterial ribosomal protein bL25 family. As to quaternary structure, part of the 50S ribosomal subunit; part of the 5S rRNA/L5/L18/L25 subcomplex. Contacts the 5S rRNA. Binds to the 5S rRNA independently of L5 and L18.

In terms of biological role, this is one of the proteins that binds to the 5S RNA in the ribosome where it forms part of the central protuberance. The polypeptide is Large ribosomal subunit protein bL25 (Nostoc sp. (strain PCC 7120 / SAG 25.82 / UTEX 2576)).